Here is a 605-residue protein sequence, read N- to C-terminus: Elongation factor 4 (605 aa).

One can recognise a tr-type G domain in the interval 11–193 (KNIRNFSIIA…TLVDVIPAPT (183 aa)). Residues 23 to 28 (DHGKST) and 140 to 143 (NKID) each bind GTP.

It belongs to the TRAFAC class translation factor GTPase superfamily. Classic translation factor GTPase family. LepA subfamily.

Its subcellular location is the cell inner membrane. The enzyme catalyses GTP + H2O = GDP + phosphate + H(+). In terms of biological role, required for accurate and efficient protein synthesis under certain stress conditions. May act as a fidelity factor of the translation reaction, by catalyzing a one-codon backward translocation of tRNAs on improperly translocated ribosomes. Back-translocation proceeds from a post-translocation (POST) complex to a pre-translocation (PRE) complex, thus giving elongation factor G a second chance to translocate the tRNAs correctly. Binds to ribosomes in a GTP-dependent manner. The chain is Elongation factor 4 from Acinetobacter baumannii (strain SDF).